A 952-amino-acid polypeptide reads, in one-letter code: Germ layers disorganized gldi-3 (952 aa).

Residues 39–100 (KSFGRATTND…NGTYINDRRL (62 aa)) form the FHA domain. Disordered stretches follow at residues 174-220 (IGPR…MPST), 483-639 (GTPK…ESTV), and 652-866 (AAQS…KERC). 2 stretches are compositionally biased toward polar residues: residues 179–195 (PSTT…STNG) and 202–220 (NRAS…MPST). Residues 523 to 537 (EESEILDVVGTDEPD) are compositionally biased toward acidic residues. The span at 553-568 (PEDHGRQTQNKIDKNV) shows a compositional bias: basic and acidic residues. Polar residues-rich tracts occupy residues 569–584 (RMSS…TPSA) and 600–620 (VTSS…NPVS). A compositionally biased stretch (low complexity) spans 662–679 (SVSNTTSSTSASLTTSSV). Basic and acidic residues predominate over residues 685 to 706 (TSSKENTDQKRAVDDSSDESAR). Positions 715–724 (SATPSSTPAE) are enriched in low complexity. Positions 725 to 742 (SSKRKQKDTSSRKMKQLD) are enriched in basic and acidic residues. A compositionally biased stretch (basic residues) spans 761–772 (TKRRDKARRSTR). The segment covering 789–800 (VEDEDETDDVQE) has biased composition (acidic residues). Composition is skewed to basic and acidic residues over residues 823–832 (IKERKTKDKD) and 856–866 (PPKTEPSKERC).

Its subcellular location is the nucleus. Its function is as follows. Potential transcription factor that may play a role in the regulation of genes involved in cell cycle G1/S transition. May bind to regulatory elements of genes. This chain is Germ layers disorganized gldi-3, found in Caenorhabditis elegans.